A 370-amino-acid polypeptide reads, in one-letter code: Forkhead box protein J1.2 (370 aa).

The tract at residues A45–T74 is disordered. A DNA-binding region (fork-head) is located at residues K108–M202. Residues P227–E246 are disordered.

The protein belongs to the FOXJ1 family.

It is found in the nucleus. In terms of biological role, key transcription factor required for motile ciliogenesis. Activates genes essential for motile cilia formation and function. The chain is Forkhead box protein J1.2 from Xenopus laevis (African clawed frog).